Reading from the N-terminus, the 135-residue chain is ATP synthase epsilon chain (135 aa).

Belongs to the ATPase epsilon chain family. F-type ATPases have 2 components, CF(1) - the catalytic core - and CF(0) - the membrane proton channel. CF(1) has five subunits: alpha(3), beta(3), gamma(1), delta(1), epsilon(1). CF(0) has three main subunits: a, b and c.

Its subcellular location is the cellular thylakoid membrane. Functionally, produces ATP from ADP in the presence of a proton gradient across the membrane. This is ATP synthase epsilon chain from Prochlorococcus marinus (strain MIT 9211).